Reading from the N-terminus, the 228-residue chain is Probable endo-1,4-beta-xylanase A (228 aa).

The signal sequence occupies residues 1–18 (MVSFSYLLLACSAIGALA). Asparagine 29 is a glycosylation site (N-linked (GlcNAc...) asparagine). The 189-residue stretch at 40–228 (AGTPSSTGWN…SSGSASITVY (189 aa)) folds into the GH11 domain. Glutamate 124 (nucleophile) is an active-site residue. Catalysis depends on glutamate 215, which acts as the Proton donor.

The protein belongs to the glycosyl hydrolase 11 (cellulase G) family.

Its subcellular location is the secreted. It carries out the reaction Endohydrolysis of (1-&gt;4)-beta-D-xylosidic linkages in xylans.. Its pathway is glycan degradation; xylan degradation. Its function is as follows. Endo-1,4-beta-xylanase involved in the hydrolysis of xylan, a major structural heterogeneous polysaccharide found in plant biomass representing the second most abundant polysaccharide in the biosphere, after cellulose. The chain is Probable endo-1,4-beta-xylanase A (xlnA) from Aspergillus fumigatus (strain CBS 144.89 / FGSC A1163 / CEA10) (Neosartorya fumigata).